We begin with the raw amino-acid sequence, 31 residues long: Glucagon-3 (31 aa).

The protein belongs to the glucagon family.

Its subcellular location is the secreted. Its function is as follows. Glucagon plays a key role in glucose metabolism and homeostasis. Regulates blood glucose by increasing gluconeogenesis and decreasing glycolysis. The sequence is that of Glucagon-3 from Huso dauricus (Kaluga sturgeon).